The chain runs to 209 residues: Tumor suppressor candidate gene 1 protein (209 aa).

3 disordered regions span residues Met1–Arg55, Ala111–Arg157, and Leu172–Leu209. The segment covering Cys14–Trp47 has biased composition (gly residues). Residues Leu70–Leu114 are a coiled coil. Residues Glu125–Gly149 are compositionally biased toward basic and acidic residues. The residue at position 150 (Ser150) is a Phosphoserine. Residues Arg152–Arg177 are a coiled coil. Residues Leu174 to Gln188 are compositionally biased toward basic and acidic residues.

In terms of tissue distribution, widely expressed at low level. Expressed at higher level in testis, weakly expressed in muscle, colon, lung and spleen. Not detected in 3 non small cell lung carcinoma (NSCLC) cell lines with homozygous deletion of the 9p region, while it is down-regulated in 3 other tumor cell lines.

The sequence is that of Tumor suppressor candidate gene 1 protein (TUSC1) from Homo sapiens (Human).